The chain runs to 367 residues: Probable butyrate kinase (367 aa).

The protein belongs to the acetokinase family.

The protein resides in the cytoplasm. It catalyses the reaction butanoate + ATP = butanoyl phosphate + ADP. The polypeptide is Probable butyrate kinase (Bacillus cereus (strain ZK / E33L)).